We begin with the raw amino-acid sequence, 375 residues long: Peroxisomal targeting signal 2 receptor (375 aa).

6 WD repeats span residues 58 to 89 (LTQD…RLFD), 102 to 133 (EHER…KIWS), 172 to 203 (KNRN…SLFD), 218 to 249 (HSGL…RIWD), 281 to 312 (AHGL…RIWR), and 340 to 372 (QHSE…FVWN).

This sequence belongs to the WD repeat peroxin-7 family. As to quaternary structure, interacts with PEX21.

The protein localises to the cytoplasm. Its subcellular location is the cytosol. It localises to the peroxisome matrix. In terms of biological role, receptor required for the peroxisomal import of proteins containing a C-terminal PTS2-type peroxisomal targeting signal, such as 3-oxoacyl-CoA thiolase. Specifically binds to cargo proteins containing a PTS2 peroxisomal targeting signal in the cytosol. Cargo protein-binding triggers interaction with PEX21 and formation of a ternary complex composed of PEX21 and PEX7 along with PTS2-containing cargo proteins, which is tranlocated into peroxisomes by passing through the PEX13-PEX14 docking complex. This chain is Peroxisomal targeting signal 2 receptor, found in Saccharomyces cerevisiae (strain ATCC 204508 / S288c) (Baker's yeast).